The chain runs to 1799 residues: Putative neural-cadherin 2 (1799 aa).

N-linked (GlcNAc...) asparagine glycosylation is found at Asn13, Asn64, Asn86, Asn118, Asn195, Asn260, Asn264, Asn283, and Asn377. Cadherin domains are found at residues 37–136 (DRFL…PPVF), 137–252 (DRQT…APQF), 253–364 (PQGI…PPQF), 368–485 (EWVT…VPKF), 486–590 (DREH…APTF), 590–709 (FAQD…QPGS), and 708–812 (GSKS…AGSM). 5 N-linked (GlcNAc...) asparagine glycosylation sites follow: Asn601, Asn793, Asn910, Asn948, and Asn969. The region spanning 973–1010 (QDHNCRTHLCYNGGRCVETRNGPKCVACPVGYNGPRCQ) is the EGF-like 1 domain. Intrachain disulfides connect Cys977/Cys988, Cys982/Cys997, Cys1000/Cys1009, Cys1191/Cys1217, Cys1224/Cys1239, Cys1233/Cys1248, and Cys1250/Cys1259. One can recognise a Laminin G-like 1 domain in the interval 1011-1217 (QSTRSFRGNG…ALARNSFPAC (207 aa)). The EGF-like 2 domain maps to 1220–1260 (TDEVCLKTEHTARCWEHGNCVASLVQAKCHCQPGWMGPGCN). Residues 1263–1454 (TIPTTFKAQS…TMARNLERNC (192 aa)) form the Laminin G-like 2 domain. N-linked (GlcNAc...) asparagine glycosylation is found at Asn1376 and Asn1437. Intrachain disulfides connect Cys1419-Cys1454, Cys1501-Cys1512, Cys1506-Cys1523, and Cys1525-Cys1534. Residues 1497 to 1535 (DRNECLDLPCLNGATCINLEPRLRYRCICPEGYWGENCE) form the EGF-like 3; calcium-binding domain. Residues 1549-1569 (ALGAIFVCLIIILILALIFVL) form a helical membrane-spanning segment. The tract at residues 1726–1799 (ASSQLPSDGG…PLPEVDKVVL (74 aa)) is disordered. Composition is skewed to gly residues over residues 1733–1744 (DGGGGSGDGPGP), 1752–1763 (LGGGGTGGGSGI), and 1775–1786 (SGAGPGGGGGSS).

It localises to the cell membrane. In terms of biological role, cadherins are calcium-dependent cell adhesion proteins. They preferentially interact with themselves in a homophilic manner in connecting cells. This is Putative neural-cadherin 2 (CadN2) from Drosophila melanogaster (Fruit fly).